A 423-amino-acid polypeptide reads, in one-letter code: Gamma-glutamyl phosphate reductase (423 aa).

This sequence belongs to the gamma-glutamyl phosphate reductase family.

It localises to the cytoplasm. The catalysed reaction is L-glutamate 5-semialdehyde + phosphate + NADP(+) = L-glutamyl 5-phosphate + NADPH + H(+). It functions in the pathway amino-acid biosynthesis; L-proline biosynthesis; L-glutamate 5-semialdehyde from L-glutamate: step 2/2. Its function is as follows. Catalyzes the NADPH-dependent reduction of L-glutamate 5-phosphate into L-glutamate 5-semialdehyde and phosphate. The product spontaneously undergoes cyclization to form 1-pyrroline-5-carboxylate. In Paracoccus denitrificans (strain Pd 1222), this protein is Gamma-glutamyl phosphate reductase.